The following is a 213-amino-acid chain: Protein-L-isoaspartate O-methyltransferase (213 aa).

S64 is a catalytic residue.

It belongs to the methyltransferase superfamily. L-isoaspartyl/D-aspartyl protein methyltransferase family.

It localises to the cytoplasm. It catalyses the reaction [protein]-L-isoaspartate + S-adenosyl-L-methionine = [protein]-L-isoaspartate alpha-methyl ester + S-adenosyl-L-homocysteine. Its function is as follows. Catalyzes the methyl esterification of L-isoaspartyl residues in peptides and proteins that result from spontaneous decomposition of normal L-aspartyl and L-asparaginyl residues. It plays a role in the repair and/or degradation of damaged proteins. The chain is Protein-L-isoaspartate O-methyltransferase from Flavobacterium johnsoniae (strain ATCC 17061 / DSM 2064 / JCM 8514 / BCRC 14874 / CCUG 350202 / NBRC 14942 / NCIMB 11054 / UW101) (Cytophaga johnsonae).